A 485-amino-acid chain; its full sequence is Aspartyl/glutamyl-tRNA(Asn/Gln) amidotransferase subunit B (485 aa).

This sequence belongs to the GatB/GatE family. GatB subfamily. Heterotrimer of A, B and C subunits.

It catalyses the reaction L-glutamyl-tRNA(Gln) + L-glutamine + ATP + H2O = L-glutaminyl-tRNA(Gln) + L-glutamate + ADP + phosphate + H(+). It carries out the reaction L-aspartyl-tRNA(Asn) + L-glutamine + ATP + H2O = L-asparaginyl-tRNA(Asn) + L-glutamate + ADP + phosphate + 2 H(+). Allows the formation of correctly charged Asn-tRNA(Asn) or Gln-tRNA(Gln) through the transamidation of misacylated Asp-tRNA(Asn) or Glu-tRNA(Gln) in organisms which lack either or both of asparaginyl-tRNA or glutaminyl-tRNA synthetases. The reaction takes place in the presence of glutamine and ATP through an activated phospho-Asp-tRNA(Asn) or phospho-Glu-tRNA(Gln). The polypeptide is Aspartyl/glutamyl-tRNA(Asn/Gln) amidotransferase subunit B (Anaplasma marginale (strain St. Maries)).